Here is a 3763-residue protein sequence, read N- to C-terminus: Colossin-B (3763 aa).

The signal sequence occupies residues 1–19; that stretch reads MKGSIFLLFIFQIFKFSSS. 4 N-linked (GlcNAc...) asparagine glycosylation sites follow: Asn-43, Asn-110, Asn-258, and Asn-284. In terms of domain architecture, Follistatin-like 1 spans 619-643; sequence DCSTLQCPSGYECKLDKNSKTRGCI. N-linked (GlcNAc...) asparagine glycans are attached at residues Asn-652 and Asn-672. 2 Follistatin-like domains span residues 701 to 724 and 729 to 752; these read HCRN…PRCF and PCEF…AKCF. The segment at 792-832 is disordered; the sequence is PPIFYETPSPTSAPPTETPSPTDTPTDKPTIPPTPTPTPSK. Over residues 810 to 820 the composition is skewed to low complexity; the sequence is PSPTDTPTDKP. 2 N-linked (GlcNAc...) asparagine glycosylation sites follow: Asn-845 and Asn-991. 2 disordered regions span residues 1033–1068 and 1095–1124; these read LGSS…SESS and PQPT…PTST. Over residues 1036 to 1051 the composition is skewed to gly residues; that stretch reads SGSGSSGNSGSSGSGG. Composition is skewed to low complexity over residues 1052 to 1068 and 1099 to 1124; these read SSND…SESS and PSTD…PTST. Asn-1054 carries an N-linked (GlcNAc...) asparagine glycan. The region spanning 1159 to 1227 is the CNA-B 1 domain; the sequence is VSGVEITLIQ…LLNKYPIDTS (69 aa). N-linked (GlcNAc...) asparagine glycans are attached at residues Asn-1229 and Asn-1247. The CNA-B 2 domain maps to 1304–1373; sequence IKGIQVTLKD…VYTMDTFQLS (70 aa). N-linked (GlcNAc...) asparagine glycosylation is present at Asn-1381. 3 CNA-B domains span residues 1437 to 1515, 1582 to 1648, and 1731 to 1809; these read LPGV…IDTK, VPGI…LTLD, and VGGV…FTLS. N-linked (GlcNAc...) asparagine glycosylation is found at Asn-1769 and Asn-1815. The disordered stretch occupies residues 1883–1955; the sequence is GSTVDGGTSV…SEQPPEDSME (73 aa). Over residues 1898–1948 the composition is skewed to low complexity; sequence STSTTTVSSSPSSSSDIGSSSDISSEVSSSLSSSPSSSEQPSEQSSSSSEQ. Positions 2015 to 2083 constitute a CNA-B 6 domain; it reads VPDVTVTLVN…DPLSGKIDFN (69 aa). N-linked (GlcNAc...) asparagine glycans are attached at residues Asn-2128, Asn-2145, Asn-2243, Asn-2294, Asn-2351, Asn-2378, Asn-2453, Asn-2493, Asn-2496, Asn-2516, Asn-2572, Asn-2601, Asn-2624, Asn-2668, Asn-2698, Asn-2714, Asn-2781, Asn-2787, Asn-2800, Asn-2838, and Asn-2858. Residues 2143–2197 form the CNA-B 7 domain; that stretch reads FPNITVRLFDQNLQPVLDNFNIQVEPTVTNALGQYYFDNLHSGSYIVKFEVPTRY. The 54-residue stretch at 2292–2345 folds into the CNA-B 8 domain; it reads VPNVTVEIFNPTGQQVYNINELLIGSTTTDSNGYYLFDEIQPGSYIIKFSNIPN. Positions 2453-2477 constitute a CNA-B 9 domain; it reads NTTTTDQNGLYYFDNLSPGLYKLLF. A CNA-B 10 domain is found at 2713 to 2766; the sequence is VNGTIVTLLDINGNTMVDADSYPINSYTTGPDGYYKFDDFSFGKYIITFSGVPD. The region spanning 2984–3061 is the CNA-B 11 domain; that stretch reads LGGVVVTLYN…DSNASPVDGY (78 aa). N-linked (GlcNAc...) asparagine glycosylation is found at Asn-3083, Asn-3130, Asn-3372, Asn-3390, Asn-3459, Asn-3466, Asn-3557, Asn-3666, Asn-3676, and Asn-3681. Positions 3128–3201 constitute a CNA-B 12 domain; the sequence is YPNITVSIYT…TKTGVNLGII (74 aa). One can recognise a CNA-B 13 domain in the interval 3664-3733; that stretch reads MANITVQLFS…NDKRDLEKIN (70 aa).

Belongs to the serine-aspartate repeat-containing protein (SDr) family.

It localises to the secreted. The polypeptide is Colossin-B (colB) (Dictyostelium discoideum (Social amoeba)).